The following is a 688-amino-acid chain: Polyribonucleotide nucleotidyltransferase (688 aa).

2 residues coordinate Mg(2+): Asp484 and Asp490. Residues 550–609 (PTTEIFNVAPDKIVEIIGQGGRVIKEIVEKFEVKIDLNKPSGEVKIMGNKERVLKTKEFI) enclose the KH domain. Residues 626-688 (DEVLEAQVKR…NKGKIALDLA (63 aa)) enclose the S1 motif domain.

This sequence belongs to the polyribonucleotide nucleotidyltransferase family. Requires Mg(2+) as cofactor.

The protein resides in the cytoplasm. It catalyses the reaction RNA(n+1) + phosphate = RNA(n) + a ribonucleoside 5'-diphosphate. Its function is as follows. Involved in mRNA degradation. Catalyzes the phosphorolysis of single-stranded polyribonucleotides processively in the 3'- to 5'-direction. The protein is Polyribonucleotide nucleotidyltransferase of Helicobacter pylori (strain HPAG1).